The primary structure comprises 413 residues: Putative glutamate synthase [NADPH] small chain (413 aa).

[4Fe-4S] cluster contacts are provided by cysteine 33, cysteine 37, cysteine 43, and cysteine 47.

As to quaternary structure, aggregate of 4 catalytic active heterodimers, consisting of a large and a small subunit. It depends on [4Fe-4S] cluster as a cofactor.

The enzyme catalyses 2 L-glutamate + NADP(+) = L-glutamine + 2-oxoglutarate + NADPH + H(+). Its pathway is amino-acid biosynthesis; L-glutamate biosynthesis via GLT pathway; L-glutamate from 2-oxoglutarate and L-glutamine (NADP(+) route): step 1/1. It participates in energy metabolism; nitrogen metabolism. The sequence is that of Putative glutamate synthase [NADPH] small chain (gltD) from Cereibacter sphaeroides (Rhodobacter sphaeroides).